Consider the following 433-residue polypeptide: Glutamate-1-semialdehyde 2,1-aminomutase (433 aa).

N6-(pyridoxal phosphate)lysine is present on K271.

This sequence belongs to the class-III pyridoxal-phosphate-dependent aminotransferase family. HemL subfamily. In terms of assembly, homodimer. The cofactor is pyridoxal 5'-phosphate.

It is found in the cytoplasm. The catalysed reaction is (S)-4-amino-5-oxopentanoate = 5-aminolevulinate. The protein operates within porphyrin-containing compound metabolism; protoporphyrin-IX biosynthesis; 5-aminolevulinate from L-glutamyl-tRNA(Glu): step 2/2. Its pathway is porphyrin-containing compound metabolism; chlorophyll biosynthesis. In Prochlorococcus marinus (strain AS9601), this protein is Glutamate-1-semialdehyde 2,1-aminomutase.